Reading from the N-terminus, the 348-residue chain is MO25-like protein At2g03410 (348 aa).

It belongs to the Mo25 family.

This Arabidopsis thaliana (Mouse-ear cress) protein is MO25-like protein At2g03410.